The following is a 157-amino-acid chain: UPF0179 protein Mhun_1135 (157 aa).

This sequence belongs to the UPF0179 family.

This chain is UPF0179 protein Mhun_1135, found in Methanospirillum hungatei JF-1 (strain ATCC 27890 / DSM 864 / NBRC 100397 / JF-1).